A 553-amino-acid polypeptide reads, in one-letter code: MPHFNPVPVSNKKFVFDDFILNMDGSLLRSEKKVNIPPKEYAVLVILLEAAGEIVSKNTLLDQVWGDAEVNEESLTRCIYALRRILSEDKEHRYIETLYGQGYRFNRPVVVVSPPAPQPTTHTLAILPFQMQDQVQSESLHYSIVKGLSQYAPFGLSVLPVTITKNCRSVKDILELMDQLRPDYYISGQMIPDGNDNIVQIEIVRVKGYHLLHQESIKLIEHQPASLLQNKIANLLLRCIPGLRWDTKQISELNSIDSTMVYLRGKHELNQYTPYSLQQALKLLTQCVNMSPNSIAPYCALAECYLSMAQMGIFDKQNAMIKAKEHAIKATELDHNNPQALGLLGLINTIHSEYIVGSLLFKQANLLSPISADIKYYYGWNLFMAGQLEEALQTINECLKLDPTRAAAGITKLWITYYHTGIDDAIRLGDELRSQHLQDNPILLSMQVMFLSLKGKHELARKLTKEISTQEITGLIAVNLLYAEYCQNSERALPTIREFLESEQRIDNNPGLLPLVLVAHGEAIAEKMWNKFKNEDNIWFKRWKQDPRLIKLR.

Residues 11–107 constitute a DNA-binding region (ompR/PhoB-type); that stretch reads NKKFVFDDFI…LYGQGYRFNR (97 aa). Position 62 is a 4-aspartylphosphate (aspartate 62). A TPR repeat occupies 372-405; it reads ADIKYYYGWNLFMAGQLEEALQTINECLKLDPTR.

Functionally, the main transcriptional regulator of the Salmonella pathogenicity island 1 (SPI1) gene expression. Activates the expression of invasion genes by a direct action at their promoters and also indirectly by increasing the level of InvF. Also binds upstream of prgH and directly activates the expression of prgHIJK operon. This Salmonella typhimurium (strain LT2 / SGSC1412 / ATCC 700720) protein is Transcriptional regulator HilA (hilA).